The primary structure comprises 210 residues: tRNA (guanine-N(7)-)-methyltransferase (210 aa).

Residues Glu36, Glu61, Asp90, and Asp112 each coordinate S-adenosyl-L-methionine. Asp112 is an active-site residue. Residues Lys116, Asp148, and 188 to 191 contribute to the substrate site; that span reads TEYE.

The protein belongs to the class I-like SAM-binding methyltransferase superfamily. TrmB family.

The catalysed reaction is guanosine(46) in tRNA + S-adenosyl-L-methionine = N(7)-methylguanosine(46) in tRNA + S-adenosyl-L-homocysteine. Its pathway is tRNA modification; N(7)-methylguanine-tRNA biosynthesis. Functionally, catalyzes the formation of N(7)-methylguanine at position 46 (m7G46) in tRNA. In Mycoplasma genitalium (strain ATCC 33530 / DSM 19775 / NCTC 10195 / G37) (Mycoplasmoides genitalium), this protein is tRNA (guanine-N(7)-)-methyltransferase.